A 301-amino-acid chain; its full sequence is Phosducin-like protein (301 aa).

Threonine 2 carries the post-translational modification N-acetylthreonine. Positions 15–60 (YYYSTSEDEDSDHEDKDRGRGAPASSSTPAEAELAGEGISVNTGPK) are disordered. Residues serine 20 and serine 25 each carry the phosphoserine modification. The span at 36 to 49 (APASSSTPAEAELA) shows a compositional bias: low complexity. The Phosducin domain occupies 36 to 299 (APASSSTPAE…TCHSEDSDLE (264 aa)). Residues 158–301 (FKQVLEIPSG…HSEDSDLEID (144 aa)) are thioredoxin fold. Residues serine 226, serine 293, and serine 296 each carry the phosphoserine modification.

Belongs to the phosducin family. In terms of assembly, interacts with the CCT chaperonin complex. Forms a complex with the beta and gamma subunits of the GTP-binding protein, transducin.

The protein resides in the cell projection. Its subcellular location is the cilium. Functionally, functions as a co-chaperone for CCT in the assembly of heterotrimeric G protein complexes, facilitates the assembly of both Gbeta-Ggamma and RGS-Gbeta5 heterodimers. Also acts as a positive regulator of hedgehog signaling and regulates ciliary function. The polypeptide is Phosducin-like protein (Pdcl) (Rattus norvegicus (Rat)).